A 144-amino-acid chain; its full sequence is (R)-specific enoyl-CoA hydratase (144 aa).

Residues 13–128 enclose the MaoC-like domain; it reads DIKEGQSASL…TFRTTCTVAG (116 aa).

Homotetramer.

It carries out the reaction a (3R)-3-hydroxyacyl-CoA = a (2E)-enoyl-CoA + H2O. Functionally, catalyzes the hydration of trans-2-enoyl-CoAs with a chain-length of 4-6 carbon atoms, forming the corresponding (3R)-3-hydroxyacyl-CoAs, which can then be utilized for the production of polyhydroxyalkanoates (PHA) polymers. Cannot use trans-2,3-octenoyl-CoA as substrate. This chain is (R)-specific enoyl-CoA hydratase, found in Rhodospirillum rubrum (strain ATCC 11170 / ATH 1.1.1 / DSM 467 / LMG 4362 / NCIMB 8255 / S1).